Here is a 155-residue protein sequence, read N- to C-terminus: SsrA-binding protein (155 aa).

The protein belongs to the SmpB family.

It is found in the cytoplasm. Functionally, required for rescue of stalled ribosomes mediated by trans-translation. Binds to transfer-messenger RNA (tmRNA), required for stable association of tmRNA with ribosomes. tmRNA and SmpB together mimic tRNA shape, replacing the anticodon stem-loop with SmpB. tmRNA is encoded by the ssrA gene; the 2 termini fold to resemble tRNA(Ala) and it encodes a 'tag peptide', a short internal open reading frame. During trans-translation Ala-aminoacylated tmRNA acts like a tRNA, entering the A-site of stalled ribosomes, displacing the stalled mRNA. The ribosome then switches to translate the ORF on the tmRNA; the nascent peptide is terminated with the 'tag peptide' encoded by the tmRNA and targeted for degradation. The ribosome is freed to recommence translation, which seems to be the essential function of trans-translation. This chain is SsrA-binding protein, found in Bacillus cytotoxicus (strain DSM 22905 / CIP 110041 / 391-98 / NVH 391-98).